Consider the following 618-residue polypeptide: Serine--tRNA ligase, cytoplasmic (618 aa).

L-serine is bound at residue Thr417–Glu419. Position 448-450 (Arg448–Glu450) interacts with ATP. L-serine is bound at residue Glu472. Glu536–Ser539 is a binding site for ATP. Ser570 lines the L-serine pocket.

This sequence belongs to the class-II aminoacyl-tRNA synthetase family. Type-1 seryl-tRNA synthetase subfamily. In terms of assembly, homodimer. The tRNA molecule binds across the dimer.

The protein resides in the cytoplasm. The enzyme catalyses tRNA(Ser) + L-serine + ATP = L-seryl-tRNA(Ser) + AMP + diphosphate + H(+). It catalyses the reaction tRNA(Sec) + L-serine + ATP = L-seryl-tRNA(Sec) + AMP + diphosphate + H(+). It functions in the pathway aminoacyl-tRNA biosynthesis; selenocysteinyl-tRNA(Sec) biosynthesis; L-seryl-tRNA(Sec) from L-serine and tRNA(Sec): step 1/1. In terms of biological role, catalyzes the attachment of serine to tRNA(Ser). Is also able to aminoacylate tRNA(Sec) with serine, to form the misacylated tRNA L-seryl-tRNA(Sec), which will be further converted into selenocysteinyl-tRNA(Sec). This chain is Serine--tRNA ligase, cytoplasmic, found in Plasmodium falciparum (isolate 3D7).